Here is a 289-residue protein sequence, read N- to C-terminus: Homeobox protein engrailed-2 (289 aa).

Composition is skewed to basic and acidic residues over residues 1–12 (MEEGGRSPREEA) and 60–83 (EFGRRKEAGGTAGEPRRPGAESRR). 2 disordered regions span residues 1–166 (MEEG…GNQP) and 179–206 (SDRPSSGPRSRKPKKKNPNKEDKRPRTA). Gly residues predominate over residues 96 to 114 (VPGGGGGGGGGSPGRGEGG). Low complexity predominate over residues 142–160 (LSGAELSVSSDSDSSQAGS). The segment at residues 200 to 259 (DKRPRTAFTAEQLQRLKAEFQTNRYLTEQRRQSLAQELGLNESQIKIWFQNKRAKIKKAT) is a DNA-binding region (homeobox).

This sequence belongs to the engrailed homeobox family.

Its subcellular location is the nucleus. The sequence is that of Homeobox protein engrailed-2 (EN2) from Gallus gallus (Chicken).